The chain runs to 122 residues: Protein NIM1-INTERACTING 2 (122 aa).

Over residues 1 to 22 (MNNSLKKEERVEEDNGKSDGNR) the composition is skewed to basic and acidic residues. The disordered stretch occupies residues 1–28 (MNNSLKKEERVEEDNGKSDGNRGKPSTE). The involved in NPR1/NIM1 interaction stretch occupies residues 39 to 45 (DEFFKIL). The Nuclear localization signal motif lies at 70 to 74 (KKRKR).

Interacts with NPR1 N-terminal region.

The protein resides in the nucleus. This is Protein NIM1-INTERACTING 2 from Arabidopsis thaliana (Mouse-ear cress).